A 357-amino-acid polypeptide reads, in one-letter code: DNA replication and repair protein RecF (357 aa).

30–37 (GANGSGKT) is a binding site for ATP.

It belongs to the RecF family.

The protein localises to the cytoplasm. In terms of biological role, the RecF protein is involved in DNA metabolism; it is required for DNA replication and normal SOS inducibility. RecF binds preferentially to single-stranded, linear DNA. It also seems to bind ATP. In Salmonella schwarzengrund (strain CVM19633), this protein is DNA replication and repair protein RecF.